The chain runs to 888 residues: Mitogen-activated protein kinase kinase kinase 12 (888 aa).

Basic and acidic residues predominate over residues 26-42; it reads MRKLDPDTSDCTPEKDL. Positions 26-104 are disordered; sequence MRKLDPDTSD…TGSPESRASR (79 aa). A phosphothreonine mark is found at threonine 37 and threonine 43. Positions 64–75 are enriched in pro residues; that stretch reads SPSPGGEPPPEP. The 242-residue stretch at 158 to 399 folds into the Protein kinase domain; it reads ILDLQWVGSG…FRQILLHLDI (242 aa). Residues 164–172 and lysine 185 contribute to the ATP site; that span reads VGSGAQGAV. The active-site Proton acceptor is the aspartate 269. Leucine-zipper stretches follow at residues 423 to 444 and 476 to 497; these read VKLH…EEEL and LNAL…EQAL. The tract at residues 557–620 is disordered; it reads GVGLPGCPKA…GGLGVGPTAW (64 aa). Basic residues predominate over residues 572–584; sequence RSRRGKTRHRKAS. A compositionally biased stretch (gly residues) spans 605–615; sequence GGLGSPGGLGV. Serine 640 carries the post-translational modification Phosphoserine. Disordered stretches follow at residues 654 to 731 and 743 to 888; these read RGRG…YQHL and TRSQ…SLPP. Residues 704–725 show a composition bias toward gly residues; it reads PGEGVGLLGTGREGTTGRGGSR. Residues 752–763 are compositionally biased toward acidic residues; sequence SEEEEGEVDSEV. 2 stretches are compositionally biased toward polar residues: residues 776 to 789 and 798 to 812; these read NMRQ…SENP and SEPS…GSTN. A compositionally biased stretch (basic and acidic residues) spans 813-823; that stretch reads TDERPDERSDD.

Belongs to the protein kinase superfamily. STE Ser/Thr protein kinase family. MAP kinase kinase kinase subfamily. Homodimer. Interacts with MBIP. Mg(2+) serves as cofactor. In terms of processing, autophosphorylated on Ser/Thr. Phosphorylated in cytosol under basal conditions and dephosphorylated when membrane-associated. The activity of MAP3K12 can be regulated through its proteasomal degradation. APOE, through a receptor-mediated mechanism, activates MAP3K12 by preventing its proteasomal degradation.

It localises to the cytoplasm. The protein resides in the cell membrane. It catalyses the reaction L-seryl-[protein] + ATP = O-phospho-L-seryl-[protein] + ADP + H(+). The enzyme catalyses L-threonyl-[protein] + ATP = O-phospho-L-threonyl-[protein] + ADP + H(+). Its function is as follows. Part of a non-canonical MAPK signaling pathway. Activated by APOE, enhances the AP-1-mediated transcription of APP, via a MAP kinase signal transduction pathway composed of MAP2K7 and MAPK1/ERK2 and MAPK3/ERK1. May be an activator of the JNK/SAPK pathway. The sequence is that of Mitogen-activated protein kinase kinase kinase 12 (Map3k12) from Rattus norvegicus (Rat).